A 103-amino-acid chain; its full sequence is Small ribosomal subunit protein uS10 (103 aa).

Belongs to the universal ribosomal protein uS10 family. In terms of assembly, part of the 30S ribosomal subunit.

Involved in the binding of tRNA to the ribosomes. The sequence is that of Small ribosomal subunit protein uS10 from Xylella fastidiosa (strain 9a5c).